A 445-amino-acid polypeptide reads, in one-letter code: Endoplasmic reticulum membrane adapter protein XK (445 aa).

Over 1–2 (MK) the chain is Cytoplasmic. The helical transmembrane segment at 3-23 (FPASVLASVFLFVAETMAALY) threads the bilayer. At 24 to 37 (LSSTYRSAGDRMWQ) the chain is on the extracellular side. The chain crosses the membrane as a helical span at residues 38–58 (ALTLFFSLMPCTLVQLTLLFV). At 59 to 68 (HRDLSRDRPL) the chain is on the cytoplasmic side. Residues 69–89 (VLLMHLLQLGPLYRCCEVFCI) traverse the membrane as a helical segment. Over 90–140 (YCQSDQNEEPYVSITKKRQMPKDGLSEEVEKEVGQSEGKLFTHRSAFSRAS) the chain is Extracellular. Ser-115 bears the Phosphoserine mark. The helical transmembrane segment at 141–161 (VIQAFLGSAPQLTLQLYITVL) threads the bilayer. Residues 162-170 (EQNITTGRF) lie on the Cytoplasmic side of the membrane. Residues 171–191 (IMVLSLLSIVYGALRCNILAI) form a helical membrane-spanning segment. Over 192–207 (KIKYDEYEVKVKPLAY) the chain is Extracellular. Residues 208–228 (VCIFLWRSFEIATRVIVLVLF) traverse the membrane as a helical segment. Topologically, residues 229 to 234 (TSVLKI) are cytoplasmic. The helical transmembrane segment at 235-255 (WVVVVILVNFFSFFLYPWILF) threads the bilayer. The Extracellular portion of the chain corresponds to 256-276 (WNSGSPFPENIEKALTRVGTT). A helical membrane pass occupies residues 277-297 (IVLGFLTLLYAGINMFCWSAV). Over 298-316 (QLKIDNPELISKSQNWYRL) the chain is Cytoplasmic. A helical membrane pass occupies residues 317–337 (LIYYMMRFVENSVLLLLWFFF). Over 338 to 348 (KTDIYMYVCAP) the chain is Extracellular. Residues 349-369 (LLILQLLIGYCTSILFMLVFY) form a helical membrane-spanning segment. Over 370–445 (QFFHPCKKLF…IWTAVDLCST (76 aa)) the chain is Cytoplasmic.

The protein belongs to the XK family. In terms of assembly, heterodimer with Kell; disulfide-linked. Interacts with VPS13A.

The protein localises to the endoplasmic reticulum membrane. Functionally, recruits the lipid transfer protein VPS13A from lipid droplets to the endoplasmic reticulum (ER) membrane. This chain is Endoplasmic reticulum membrane adapter protein XK, found in Rattus norvegicus (Rat).